We begin with the raw amino-acid sequence, 830 residues long: Leucine--tRNA ligase (830 aa).

The 'HIGH' region motif lies at 34–44 (PYPSGNIHMGH). The 'KMSKS' region signature appears at 592 to 596 (KMSKS). Residue Lys-595 participates in ATP binding.

Belongs to the class-I aminoacyl-tRNA synthetase family.

It localises to the cytoplasm. It carries out the reaction tRNA(Leu) + L-leucine + ATP = L-leucyl-tRNA(Leu) + AMP + diphosphate. The polypeptide is Leucine--tRNA ligase (Ehrlichia ruminantium (strain Gardel)).